We begin with the raw amino-acid sequence, 353 residues long: Photosystem II protein D1 (353 aa).

The residue at position 2 (threonine 2) is an N-acetylthreonine. Residue threonine 2 is modified to Phosphothreonine. 3 consecutive transmembrane segments (helical) span residues 29-46 (YIGWFGVLMIPTLLTATS), 118-133 (HFLLGVACYMGREWEL), and 142-156 (WIAVAYSAPVAAATA). Histidine 118 provides a ligand contact to chlorophyll a. Residue tyrosine 126 coordinates pheophytin a. [CaMn4O5] cluster-binding residues include aspartate 170 and glutamate 189. The helical transmembrane segment at 197–218 (FHMLGVAGVFGGSLFSAMHGSL) threads the bilayer. Histidine 198 is a chlorophyll a binding site. A quinone is bound by residues histidine 215 and 264–265 (SF). Histidine 215 serves as a coordination point for Fe cation. Histidine 272 is a Fe cation binding site. The helical transmembrane segment at 274–288 (FLAAWPVVGIWFTAL) threads the bilayer. Histidine 332, glutamate 333, aspartate 342, and alanine 344 together coordinate [CaMn4O5] cluster. Residues 345–353 (AIEAPSTNG) constitute a propeptide that is removed on maturation.

Belongs to the reaction center PufL/M/PsbA/D family. As to quaternary structure, PSII is composed of 1 copy each of membrane proteins PsbA, PsbB, PsbC, PsbD, PsbE, PsbF, PsbH, PsbI, PsbJ, PsbK, PsbL, PsbM, PsbT, PsbX, PsbY, PsbZ, Psb30/Ycf12, at least 3 peripheral proteins of the oxygen-evolving complex and a large number of cofactors. It forms dimeric complexes. It depends on The D1/D2 heterodimer binds P680, chlorophylls that are the primary electron donor of PSII, and subsequent electron acceptors. It shares a non-heme iron and each subunit binds pheophytin, quinone, additional chlorophylls, carotenoids and lipids. D1 provides most of the ligands for the Mn4-Ca-O5 cluster of the oxygen-evolving complex (OEC). There is also a Cl(-1) ion associated with D1 and D2, which is required for oxygen evolution. The PSII complex binds additional chlorophylls, carotenoids and specific lipids. as a cofactor. Tyr-161 forms a radical intermediate that is referred to as redox-active TyrZ, YZ or Y-Z. Post-translationally, C-terminally processed by CTPA; processing is essential to allow assembly of the oxygen-evolving complex and thus photosynthetic growth.

It is found in the plastid. The protein resides in the chloroplast thylakoid membrane. It catalyses the reaction 2 a plastoquinone + 4 hnu + 2 H2O = 2 a plastoquinol + O2. Functionally, photosystem II (PSII) is a light-driven water:plastoquinone oxidoreductase that uses light energy to abstract electrons from H(2)O, generating O(2) and a proton gradient subsequently used for ATP formation. It consists of a core antenna complex that captures photons, and an electron transfer chain that converts photonic excitation into a charge separation. The D1/D2 (PsbA/PsbD) reaction center heterodimer binds P680, the primary electron donor of PSII as well as several subsequent electron acceptors. The protein is Photosystem II protein D1 of Gossypium barbadense (Sea Island cotton).